A 490-amino-acid polypeptide reads, in one-letter code: Glutamate--tRNA ligase (490 aa).

The short motif at 12 to 22 (PSPTGTPHVGL) is the 'HIGH' region element. The 'KMSKS' region signature appears at 256–260 (KLSKR). Position 259 (lysine 259) interacts with ATP.

The protein belongs to the class-I aminoacyl-tRNA synthetase family. Glutamate--tRNA ligase type 1 subfamily. As to quaternary structure, monomer.

It localises to the cytoplasm. It catalyses the reaction tRNA(Glu) + L-glutamate + ATP = L-glutamyl-tRNA(Glu) + AMP + diphosphate. In terms of biological role, catalyzes the attachment of glutamate to tRNA(Glu) in a two-step reaction: glutamate is first activated by ATP to form Glu-AMP and then transferred to the acceptor end of tRNA(Glu). This chain is Glutamate--tRNA ligase, found in Mycobacterium sp. (strain KMS).